An 88-amino-acid chain; its full sequence is Probable Fe(2+)-trafficking protein (88 aa).

The protein belongs to the Fe(2+)-trafficking protein family.

Functionally, could be a mediator in iron transactions between iron acquisition and iron-requiring processes, such as synthesis and/or repair of Fe-S clusters in biosynthetic enzymes. This Neisseria gonorrhoeae (strain ATCC 700825 / FA 1090) protein is Probable Fe(2+)-trafficking protein.